We begin with the raw amino-acid sequence, 181 residues long: MMKFKPNQTRTYDREGFKKRAACLCFRSEQEDEVLLVSSSRYPDQWIVPGGGMEPEEEPGGAAVREVYEEAGVKGKLGRLLGIFEQNQDRKHRTYVYVLTVTEILEDWEDSVNIGRKREWFKVEDAIKVLQCHKPVHAEYLEKLKLGCSPANGNSTVPSLPDNNALFVTAAQTSGLPSSVR.

Substrate is bound by residues Arg-10, Lys-18–Arg-20, and Ser-39–Arg-41. In terms of domain architecture, Nudix hydrolase spans Lys-18–Lys-145. Residues Gly-50 and Glu-66 each coordinate Mg(2+). The short motif at Gly-51 to Gly-72 is the Nudix box element. Catalysis depends on Glu-69, which acts as the Proton acceptor. Glu-70 lines the Mg(2+) pocket. Residues Arg-90–His-92, Arg-116, and Lys-134 each bind substrate.

This sequence belongs to the Nudix hydrolase family. DIPP subfamily. Requires Mg(2+) as cofactor. Mn(2+) is required as a cofactor.

It is found in the cytoplasm. It carries out the reaction diphospho-myo-inositol polyphosphate + H2O = myo-inositol polyphosphate + phosphate.. In terms of biological role, cleaves a beta-phosphate from the diphosphate groups in PP-InsP5 (diphosphoinositol pentakisphosphate), PP-InsP4 and [PP]2-InsP4 (bisdiphosphoinositol tetrakisphosphate), suggesting that it may play a role in signal transduction. Also able to catalyze the hydrolysis of dinucleoside oligophosphate Ap6A, but not Ap5A. The major reaction products are ADP and p4a from Ap6A. Also able to hydrolyze 5-phosphoribose 1-diphosphate. Does not play a role in U8 snoRNA decapping activity. Binds U8 snoRNA. This Homo sapiens (Human) protein is Diphosphoinositol polyphosphate phosphohydrolase NUDT4B.